Here is a 103-residue protein sequence, read N- to C-terminus: Nucleoid-associated protein Anae109_3761 (103 aa).

This sequence belongs to the YbaB/EbfC family. In terms of assembly, homodimer.

The protein localises to the cytoplasm. It localises to the nucleoid. Its function is as follows. Binds to DNA and alters its conformation. May be involved in regulation of gene expression, nucleoid organization and DNA protection. The sequence is that of Nucleoid-associated protein Anae109_3761 from Anaeromyxobacter sp. (strain Fw109-5).